The primary structure comprises 775 residues: Semaphorin-3E (775 aa).

The first 25 residues, 1-25 (MAPAGHILTLLLWGHLLELWTPGHS), serve as a signal peptide directing secretion. A Sema domain is found at 32–516 (RLRLSHKELL…SASAVAQVRF (485 aa)). Asn-44 carries N-linked (GlcNAc...) asparagine glycosylation. An intrachain disulfide couples Cys-105 to Cys-115. N-linked (GlcNAc...) asparagine glycosylation occurs at Asn-126. The cysteines at positions 133 and 142 are disulfide-linked. Asn-175 and Asn-330 each carry an N-linked (GlcNAc...) asparagine glycan. 3 disulfide bridges follow: Cys-270–Cys-382, Cys-294–Cys-342, and Cys-519–Cys-537. Residues 581 to 669 (ALDRTEERLA…NFVHTVRKIT (89 aa)) form the Ig-like C2-type domain. Residue Asn-596 is glycosylated (N-linked (GlcNAc...) asparagine). Residues Cys-654 and Cys-729 are joined by a disulfide bond.

This sequence belongs to the semaphorin family. Interacts with PLXND1. As to expression, detected in neurons in the thalamus. Detected in embryonic vasculature. Developing lungs, developing skeletal elements and ventral horns of the developing neural tube. Correlates positively with tumor progression.

It localises to the secreted. Its function is as follows. Plays an important role in signaling via the cell surface receptor PLXND1. Mediates reorganization of the actin cytoskeleton, leading to the retraction of cell projections. Promotes focal adhesion disassembly and inhibits adhesion of endothelial cells to the extracellular matrix. Regulates angiogenesis, both during embryogenesis and after birth. Can down-regulate sprouting angiogenesis. Required for normal vascular patterning during embryogenesis. Plays an important role in ensuring the specificity of synapse formation. In Mus musculus (Mouse), this protein is Semaphorin-3E (Sema3e).